The chain runs to 101 residues: Putative defensin-like protein 253 (101 aa).

The first 23 residues, 1 to 23, serve as a signal peptide directing secretion; it reads MRFASLFVVYCTFMFLDISHVKC. 4 disulfide bridges follow: C31–C84, C41–C66, C49–C76, and C64–C78.

The protein belongs to the DEFL family.

Its subcellular location is the secreted. The polypeptide is Putative defensin-like protein 253 (SCRL15) (Arabidopsis thaliana (Mouse-ear cress)).